The primary structure comprises 360 residues: DNA replication and repair protein RecF (360 aa).

30–37 (GHNGSGKT) provides a ligand contact to ATP.

This sequence belongs to the RecF family.

The protein localises to the cytoplasm. The RecF protein is involved in DNA metabolism; it is required for DNA replication and normal SOS inducibility. RecF binds preferentially to single-stranded, linear DNA. It also seems to bind ATP. The protein is DNA replication and repair protein RecF of Haemophilus ducreyi (strain 35000HP / ATCC 700724).